The primary structure comprises 554 residues: Sesquiterpene synthase 14b (554 aa).

Positions 305, 309, 449, and 457 each coordinate Mg(2+). A DDXXD motif motif is present at residues 305 to 309; that stretch reads DDLYD.

It belongs to the terpene synthase family. Tpsa subfamily. Requires Mg(2+) as cofactor. Mn(2+) serves as cofactor.

The catalysed reaction is (2E,6E)-farnesyl diphosphate = (E)-gamma-bisabolene + diphosphate. The enzyme catalyses (2Z,6Z)-farnesyl diphosphate = (E)-gamma-bisabolene + diphosphate. It catalyses the reaction (2Z,6Z)-farnesyl diphosphate = (E)-alpha-bisabolene + diphosphate. It carries out the reaction (2Z,6Z)-farnesyl diphosphate = (Z)-beta-farnesene + diphosphate. The catalysed reaction is (2E,6E)-farnesyl diphosphate = (E)-beta-farnesene + diphosphate. The enzyme catalyses (2E,6E)-farnesyl diphosphate = (+)-thujopsene + diphosphate. It catalyses the reaction (2Z,6Z)-farnesyl diphosphate = (E)-beta-farnesene + diphosphate. It carries out the reaction (2E,6E)-farnesyl diphosphate = (Z)-beta-farnesene + diphosphate. The catalysed reaction is (2Z,6Z)-farnesyl diphosphate = beta-acoradiene + diphosphate. The enzyme catalyses (2Z,6Z)-farnesyl diphosphate = alpha-acoradiene + diphosphate. It catalyses the reaction (2Z,6Z)-farnesyl diphosphate = beta-bisabolene + diphosphate. It carries out the reaction (2E,6E)-farnesyl diphosphate = (-)-alpha-cedrene + diphosphate. The catalysed reaction is (2E,6E)-farnesyl diphosphate = beta-bisabolene + diphosphate. The enzyme catalyses (2E,6E)-farnesyl diphosphate = beta-acoradiene + diphosphate. It catalyses the reaction (2Z,6Z)-farnesyl diphosphate = (-)-alpha-cedrene + diphosphate. It carries out the reaction (2E)-geranyl diphosphate = terpinolene + diphosphate. The catalysed reaction is (2E)-geranyl diphosphate = limonene + diphosphate. The enzyme catalyses (2E)-geranyl diphosphate = beta-myrcene + diphosphate. It participates in secondary metabolite biosynthesis; terpenoid biosynthesis. In terms of biological role, sesquiterpene synthase involved in the biosynthesis of volatile compounds. Mediates the conversion of (2E,6E)-farnesyl diphosphate ((EE)-FPP) into (+)-thujopsene, beta-bisabolene, alpha-cederene, beta-acoradiene, (E)-gamma-bisabolene, (Z)-alpha-bisabolene, (Z)-beta-farnesene and (E)-beta-farnesene, and of (2Z,6Z)-farnesyl diphosphate ((ZZ)-FPP) into (E)-gamma-bisabolene, (E)-alpha-bisabolene, (E)-beta-farnesene, (Z)-beta-farnesene, beta-bisabolene, beta-acoradiene and alpha-acoradiene. Can act with a low efficiency as a monoterpene synthase with geranyl diphosphate (GPP) as substrate, thus producing beta-myrcene, limonene and terpinolene. This is Sesquiterpene synthase 14b from Solanum habrochaites (Wild tomato).